We begin with the raw amino-acid sequence, 264 residues long: Thymidylate synthase (264 aa).

R21 is a binding site for dUMP. A (6R)-5,10-methylene-5,6,7,8-tetrahydrofolate-binding site is contributed by H51. 126–127 (RR) provides a ligand contact to dUMP. C146 serves as the catalytic Nucleophile. DUMP contacts are provided by residues 166-169 (RSAD), N177, and 207-209 (HIY). D169 contacts (6R)-5,10-methylene-5,6,7,8-tetrahydrofolate. (6R)-5,10-methylene-5,6,7,8-tetrahydrofolate is bound at residue A263.

It belongs to the thymidylate synthase family. Bacterial-type ThyA subfamily. In terms of assembly, homodimer.

The protein localises to the cytoplasm. It carries out the reaction dUMP + (6R)-5,10-methylene-5,6,7,8-tetrahydrofolate = 7,8-dihydrofolate + dTMP. Its pathway is pyrimidine metabolism; dTTP biosynthesis. In terms of biological role, catalyzes the reductive methylation of 2'-deoxyuridine-5'-monophosphate (dUMP) to 2'-deoxythymidine-5'-monophosphate (dTMP) while utilizing 5,10-methylenetetrahydrofolate (mTHF) as the methyl donor and reductant in the reaction, yielding dihydrofolate (DHF) as a by-product. This enzymatic reaction provides an intracellular de novo source of dTMP, an essential precursor for DNA biosynthesis. This is Thymidylate synthase from Bacteroides thetaiotaomicron (strain ATCC 29148 / DSM 2079 / JCM 5827 / CCUG 10774 / NCTC 10582 / VPI-5482 / E50).